Reading from the N-terminus, the 134-residue chain is Small ribosomal subunit protein uS8c (134 aa).

The protein belongs to the universal ribosomal protein uS8 family. Part of the 30S ribosomal subunit.

The protein resides in the plastid. It localises to the chloroplast. Functionally, one of the primary rRNA binding proteins, it binds directly to 16S rRNA central domain where it helps coordinate assembly of the platform of the 30S subunit. This chain is Small ribosomal subunit protein uS8c (rps8), found in Arabis hirsuta (Hairy rock-cress).